A 430-amino-acid polypeptide reads, in one-letter code: MKQALRVAFGFLMLWAAVLHAEVRIEITQGVDSARPIGVVPFQWAGQGAAPEDVGGIVAADLRNSGKFNPLDRSRLPQQPTSAQEVQPAAWSALGIDAVVVGQVTSNPDGSYQVAYQLVDTGGAPGTTLAQGSFKVTKQYLRYAAHAASDAVFEKLTGIKGAFRTRIAYVVQKNGGQFPYELRVSDYDGYNQFLVHRSSQPLMSPAWSPDGSKLAYVTFESGRSALVVQTLANGAVRQIASFPQHNGAPAFSPDGSKLAFALSKTGSLNLYVMDLGSGQIRQVTNGRSNNTEPSWFPDSQNLAFTSDQAGRPQVYKVNINGGTPQRITWEGSQNQDADVSADGKTMVMVSSAGGQQHIAKQDLEAGGVQVLSSTFLDETPSLAPNGTMVIYSSSQGMGSVLNLVSTDGRFKARLPATDGQVKSPAWSPYL.

Positions 1–21 are cleaved as a signal peptide; sequence MKQALRVAFGFLMLWAAVLHA.

The protein belongs to the TolB family. In terms of assembly, the Tol-Pal system is composed of five core proteins: the inner membrane proteins TolA, TolQ and TolR, the periplasmic protein TolB and the outer membrane protein Pal. They form a network linking the inner and outer membranes and the peptidoglycan layer.

The protein resides in the periplasm. Its function is as follows. Part of the Tol-Pal system, which plays a role in outer membrane invagination during cell division and is important for maintaining outer membrane integrity. TolB occupies a key intermediary position in the Tol-Pal system because it communicates directly with both membrane-embedded components, Pal in the outer membrane and TolA in the inner membrane. This Klebsiella pneumoniae (strain 342) protein is Tol-Pal system protein TolB.